Reading from the N-terminus, the 279-residue chain is Undecaprenyl-diphosphatase (279 aa).

Helical transmembrane passes span 2–22 (LIIELLKAIFFGIIEGITEWL), 44–64 (AFIEMFNIVIQLGAIIAVMLI), 85–105 (WQLWLKVVIACIPSILIAVPL), 113–133 (FYFMVPIAIALIVYGIAFIWI), 163–183 (VLSIVPGTSRSGATILGAIIL), 188–208 (TVAADFTFFLAIPTMFGYSGL), 223–243 (AQVLILLVASLTAFVVSLLAI), and 255–275 (FTIFGKYRIVLGSLLLIYSFF).

The protein belongs to the UppP family.

It localises to the cell membrane. It catalyses the reaction di-trans,octa-cis-undecaprenyl diphosphate + H2O = di-trans,octa-cis-undecaprenyl phosphate + phosphate + H(+). Its function is as follows. Catalyzes the dephosphorylation of undecaprenyl diphosphate (UPP). Confers resistance to bacitracin. The chain is Undecaprenyl-diphosphatase from Streptococcus pyogenes serotype M2 (strain MGAS10270).